The following is a 967-amino-acid chain: Aminopeptidase N (967 aa).

Topologically, residues 2 to 8 are cytoplasmic; sequence AKGFYIS. A helical; Signal-anchor for type II membrane protein membrane pass occupies residues 9–32; the sequence is KSLGILGILLGVAAVCTIIALSVV. A cytosolic Ser/Thr-rich junction region spans residues 33–68; it reads YSQEKNKNANSSPVASTTPSASATTNPASATTLDQS. The Extracellular portion of the chain corresponds to 33-967; that stretch reads YSQEKNKNAN…VLQWFTENSK (935 aa). Positions 40 to 62 are disordered; sequence NANSSPVASTTPSASATTNPASA. Over residues 41–62 the composition is skewed to low complexity; that stretch reads ANSSPVASTTPSASATTNPASA. The tract at residues 69–967 is metalloprotease; it reads KAWNRYRLPN…VLQWFTENSK (899 aa). A glycan (N-linked (GlcNAc...) asparagine) is linked at N128. A Sulfotyrosine modification is found at Y176. N-linked (GlcNAc...) asparagine glycans are attached at residues N234 and N265. Residues 288–295 are necessary and sufficient to mediate interaction with HCoV-229E; it reads DYVEKQAS. N319 is a glycosylation site (N-linked (GlcNAc...) asparagine). 352-356 serves as a coordination point for substrate; sequence GAMEN. H388 is a Zn(2+) binding site. The active-site Proton acceptor is E389. Zn(2+)-binding residues include H392 and E411. Sulfotyrosine is present on residues Y419 and Y424. N-linked (GlcNAc...) asparagine glycans are attached at residues N527, N573, N625, N681, and N735. 2 disulfides stabilise this stretch: C761–C768 and C798–C834. An N-linked (GlcNAc...) asparagine glycan is attached at N818. Sulfotyrosine is present on Y913.

Belongs to the peptidase M1 family. In terms of assembly, homodimer. Interacts with SLC6A19. (Microbial infection) Interacts with the S1 domain of human coronavirus 229E/HCoV-229E spike protein. The cofactor is Zn(2+). Post-translationally, sulfated. N- and O-glycosylated. In terms of processing, may undergo proteolysis and give rise to a soluble form. Expressed in epithelial cells of the kidney, intestine, and respiratory tract; granulocytes, monocytes, fibroblasts, endothelial cells, cerebral pericytes at the blood-brain barrier, synaptic membranes of cells in the CNS. Also expressed in endometrial stromal cells, but not in the endometrial glandular cells. Found in the vasculature of tissues that undergo angiogenesis and in malignant gliomas and lymph node metastases from multiple tumor types but not in blood vessels of normal tissues. A soluble form has been found in plasma. It is found to be elevated in plasma and effusions of cancer patients.

The protein localises to the cell membrane. The enzyme catalyses Release of an N-terminal amino acid, Xaa-|-Yaa- from a peptide, amide or arylamide. Xaa is preferably Ala, but may be most amino acids including Pro (slow action). When a terminal hydrophobic residue is followed by a prolyl residue, the two may be released as an intact Xaa-Pro dipeptide.. Functionally, broad specificity aminopeptidase which plays a role in the final digestion of peptides generated from hydrolysis of proteins by gastric and pancreatic proteases. Also involved in the processing of various peptides including peptide hormones, such as angiotensin III and IV, neuropeptides, and chemokines. May also be involved the cleavage of peptides bound to major histocompatibility complex class II molecules of antigen presenting cells. May have a role in angiogenesis and promote cholesterol crystallization. May have a role in amino acid transport by acting as binding partner of amino acid transporter SLC6A19 and regulating its activity. Its function is as follows. (Microbial infection) Acts as a receptor for human coronavirus 229E/HCoV-229E. In case of human coronavirus 229E (HCoV-229E) infection, serves as receptor for HCoV-229E spike glycoprotein. (Microbial infection) Mediates as well Human cytomegalovirus (HCMV) infection. The sequence is that of Aminopeptidase N (ANPEP) from Homo sapiens (Human).